The chain runs to 55 residues: Large ribosomal subunit protein bL33 (55 aa).

It belongs to the bacterial ribosomal protein bL33 family.

The protein is Large ribosomal subunit protein bL33 of Edwardsiella ictaluri (strain 93-146).